Here is a 337-residue protein sequence, read N- to C-terminus: MAVEMFYDDDADLSIIQGRKVAVIGYGSQGHAHSLSLRDSGVQVKVGLKEGSKSREKAEEQGLEVDTPAEVAKWADVIMLLAPDTAQASIFTNDIEPNLEDGNALFFGHGLNIHFGLIKAPENVTVGMVAPKGPGHLVRRQFVDGKGVPCLIAIDQDPKGEGQALALSYAAAIGGARAGVIKTTFKEETETDLFGEQAVLCGGTEELIKTGFEVMVEAGYAPEMAYFEVLHELKLIVDLIYEGGIARMNYSVSDTAEFGGYLSGPRVIDADTKKRMQDILKDIQDGSFVKRLVANVEGGNKELEALRKANAEHPIEVTGKKLRDLMSWVDRPITETA.

The 181-residue stretch at 3–183 (VEMFYDDDAD…GGARAGVIKT (181 aa)) folds into the KARI N-terminal Rossmann domain. NADP(+)-binding positions include 26–29 (YGSQ), K49, S52, S54, and 84–87 (DTAQ). H109 is a catalytic residue. Residue G135 participates in NADP(+) binding. Positions 184-329 (TFKEETETDL…KKLRDLMSWV (146 aa)) constitute a KARI C-terminal knotted domain. Mg(2+)-binding residues include D192, E196, E228, and E232. Substrate is bound at residue S253.

Belongs to the ketol-acid reductoisomerase family. Mg(2+) serves as cofactor.

It carries out the reaction (2R)-2,3-dihydroxy-3-methylbutanoate + NADP(+) = (2S)-2-acetolactate + NADPH + H(+). The enzyme catalyses (2R,3R)-2,3-dihydroxy-3-methylpentanoate + NADP(+) = (S)-2-ethyl-2-hydroxy-3-oxobutanoate + NADPH + H(+). It participates in amino-acid biosynthesis; L-isoleucine biosynthesis; L-isoleucine from 2-oxobutanoate: step 2/4. It functions in the pathway amino-acid biosynthesis; L-valine biosynthesis; L-valine from pyruvate: step 2/4. Functionally, involved in the biosynthesis of branched-chain amino acids (BCAA). Catalyzes an alkyl-migration followed by a ketol-acid reduction of (S)-2-acetolactate (S2AL) to yield (R)-2,3-dihydroxy-isovalerate. In the isomerase reaction, S2AL is rearranged via a Mg-dependent methyl migration to produce 3-hydroxy-3-methyl-2-ketobutyrate (HMKB). In the reductase reaction, this 2-ketoacid undergoes a metal-dependent reduction by NADPH to yield (R)-2,3-dihydroxy-isovalerate. This Mycolicibacterium smegmatis (strain ATCC 700084 / mc(2)155) (Mycobacterium smegmatis) protein is Ketol-acid reductoisomerase (NADP(+)).